Reading from the N-terminus, the 167-residue chain is MVAVENPIHRAYLLKIVGEEGLRIVEAMPEEEVTDEHLAEITGISLNTVRKSLYLLYEHRLAIYRRKRDPESGWLTYLWKICPESLDSALEAEVRKLINKLNARLRYEKDHVFYACVNGCARFVFEEASENNFTCPFCQGSLEYMENSTIVEVIEERIKELSAALCS.

Residues 5–87 (ENPIHRAYLL…LWKICPESLD (83 aa)) form the HTH TFE/IIEalpha-type domain.

It belongs to the TFE family. Monomer. Interaction with RNA polymerase subunits RpoF and RpoE is necessary for Tfe stimulatory transcription activity. Able to interact with Tbp and RNA polymerase in the absence of DNA promoter. Interacts both with the preinitiation and elongation complexes.

Functionally, transcription factor that plays a role in the activation of archaeal genes transcribed by RNA polymerase. Facilitates transcription initiation by enhancing TATA-box recognition by TATA-box-binding protein (Tbp), and transcription factor B (Tfb) and RNA polymerase recruitment. Not absolutely required for transcription in vitro, but particularly important in cases where Tbp or Tfb function is not optimal. It dynamically alters the nucleic acid-binding properties of RNA polymerases by stabilizing the initiation complex and destabilizing elongation complexes. Seems to translocate with the RNA polymerase following initiation and acts by binding to the non template strand of the transcription bubble in elongation complexes. The polypeptide is Transcription factor E (Methanothrix thermoacetophila (strain DSM 6194 / JCM 14653 / NBRC 101360 / PT) (Methanosaeta thermophila)).